The sequence spans 63 residues: Small ribosomal subunit protein eS30 (63 aa).

Residues 1–33 form a disordered region; the sequence is MGKVHGSLARAGKVKSQTPKVEKQEKPKKPQGR.

It belongs to the eukaryotic ribosomal protein eS30 family. As to quaternary structure, component of the small ribosomal subunit. Mature ribosomes consist of a small (40S) and a large (60S) subunit. The 40S subunit contains about 32 different proteins and 1 molecule of RNA (18S). The 60S subunit contains 45 different proteins and 3 molecules of RNA (25S, 5.8S and 5S).

The protein resides in the cytoplasm. In terms of biological role, component of the ribosome, a large ribonucleoprotein complex responsible for the synthesis of proteins in the cell. The small ribosomal subunit (SSU) binds messenger RNAs (mRNAs) and translates the encoded message by selecting cognate aminoacyl-transfer RNA (tRNA) molecules. The large subunit (LSU) contains the ribosomal catalytic site termed the peptidyl transferase center (PTC), which catalyzes the formation of peptide bonds, thereby polymerizing the amino acids delivered by tRNAs into a polypeptide chain. The nascent polypeptides leave the ribosome through a tunnel in the LSU and interact with protein factors that function in enzymatic processing, targeting, and the membrane insertion of nascent chains at the exit of the ribosomal tunnel. In Candida albicans (strain SC5314 / ATCC MYA-2876) (Yeast), this protein is Small ribosomal subunit protein eS30 (RPS30).